A 141-amino-acid polypeptide reads, in one-letter code: Cystatin (141 aa).

Residues 1–26 form the signal peptide; sequence MVHFQLPVAAPLCLLCALLLLPSATM. Residues 29–129 enclose the Cystatin domain; it reads GGLSPRSVSD…CHFQVWSRPW (101 aa). Residues 73–77 carry the Secondary area of contact motif; it reads QVVAG. 2 disulfide bridges follow: C91–C107 and C120–C140.

Belongs to the cystatin family. As to expression, expressed at a low level by the venom gland (at protein level).

The protein localises to the secreted. Functionally, inhibits various C1 cysteine proteases including cathepsin L, papain and cathepsin B. This protein has no toxic activity and its function in the venom is unknown. It may play a role as a housekeeping or regulatory protein. This chain is Cystatin, found in Naja kaouthia (Monocled cobra).